Consider the following 216-residue polypeptide: MGISSSNPFSSIFKSKAIKLLMLGLDGSGKTTILYKLMLNEVVSTISTLGYNVETIQHKHLNLTLWDLAGEERIRTLWKPFYNKCTAIIFVVDSSDRLRIDEAASELAKLMKEEELKGCSLLIFATKQDCISPMEIPELTDQLGLHDIKDRRWYVQPTRTLEGIGIYEGLDWLSTKIIEDRKSKSFKSKFSFSNKSKQQKSNSQPNTPRKNIQMMT.

The span at 188 to 204 (SKFSFSNKSKQQKSNSQ) shows a compositional bias: low complexity. The segment at 188–216 (SKFSFSNKSKQQKSNSQPNTPRKNIQMMT) is disordered. The span at 205-216 (PNTPRKNIQMMT) shows a compositional bias: polar residues.

It belongs to the small GTPase superfamily. Arf family.

The protein localises to the golgi apparatus. Its function is as follows. GTP-binding protein involved in protein trafficking; may modulate vesicle budding and uncoating within the Golgi apparatus. The sequence is that of ADP-ribosylation factor D (arrD) from Dictyostelium discoideum (Social amoeba).